The sequence spans 487 residues: Zinc finger protein 345 (487 aa).

15 C2H2-type zinc fingers span residues 62–84, 90–112, 118–140, 146–168, 174–196, 202–224, 230–252, 258–280, 286–308, 314–336, 342–364, 370–392, 398–420, 426–448, and 454–476; these read LECKECGKDFSFVSVLIRHQRIH, YECKECGKAFGSGANLAYHQRIH, YECNECGKAFGSGSNLTHHQRIH, YECKECGKAFSFGSGLIRHQIIH, YECKVCGKSFSFESALTRHHRIH, YECKDCGKAFGSGSNLTQHRRVH, YECKGCGMAFSSGSALTRHQRIH, YICNECGKAFSFGSALTRHQRIH, YVCKECGKAFNSGSDLTQHQRIH, YECKECEKAFRSGSKLIQHQRMH, YECKECGKAFSSGSDLTQHQRIH, YECKECGKAFASGSKLIQHQLIH, YECRECRKSFSSGSALNRHQRIH, YECKECEKTFGTGSTLTQHQRMH, and YECKACGKALGRGSEIQQHKKNH.

It belongs to the krueppel C2H2-type zinc-finger protein family.

Its subcellular location is the nucleus. Functionally, may be involved in transcriptional regulation. The polypeptide is Zinc finger protein 345 (ZNF345) (Bos taurus (Bovine)).